The sequence spans 243 residues: Large ribosomal subunit protein uL2 (243 aa).

Basic residues predominate over residues 1-12 (MGRRIQGQRRGR). Disordered stretches follow at residues 1–38 (MGRR…SDDT) and 198–243 (VDHP…GSSE). Composition is skewed to basic and acidic residues over residues 24–34 (YKAELSHKQSE) and 221–231 (PPGRKVGDIAS).

This sequence belongs to the universal ribosomal protein uL2 family. In terms of assembly, part of the 50S ribosomal subunit. Forms a bridge to the 30S subunit in the 70S ribosome.

In terms of biological role, one of the primary rRNA binding proteins. Required for association of the 30S and 50S subunits to form the 70S ribosome, for tRNA binding and peptide bond formation. It has been suggested to have peptidyltransferase activity; this is somewhat controversial. Makes several contacts with the 16S rRNA in the 70S ribosome. The sequence is that of Large ribosomal subunit protein uL2 from Haloquadratum walsbyi (strain DSM 16790 / HBSQ001).